Here is an 888-residue protein sequence, read N- to C-terminus: DNA mismatch repair protein MutS (888 aa).

Residues Ile249–Pro271 are disordered. Gly638–Ser645 lines the ATP pocket.

This sequence belongs to the DNA mismatch repair MutS family.

This protein is involved in the repair of mismatches in DNA. It is possible that it carries out the mismatch recognition step. This protein has a weak ATPase activity. The protein is DNA mismatch repair protein MutS of Nitrobacter winogradskyi (strain ATCC 25391 / DSM 10237 / CIP 104748 / NCIMB 11846 / Nb-255).